An 89-amino-acid chain; its full sequence is Small ribosomal subunit protein uS15 (89 aa).

The protein belongs to the universal ribosomal protein uS15 family. In terms of assembly, part of the 30S ribosomal subunit. Forms a bridge to the 50S subunit in the 70S ribosome, contacting the 23S rRNA.

One of the primary rRNA binding proteins, it binds directly to 16S rRNA where it helps nucleate assembly of the platform of the 30S subunit by binding and bridging several RNA helices of the 16S rRNA. In terms of biological role, forms an intersubunit bridge (bridge B4) with the 23S rRNA of the 50S subunit in the ribosome. This chain is Small ribosomal subunit protein uS15, found in Methylococcus capsulatus (strain ATCC 33009 / NCIMB 11132 / Bath).